Here is a 213-residue protein sequence, read N- to C-terminus: MLLRKELEPTGYVTWEVPNNEKIIAITFDDGPDPTYTPQVLDLLRQYKAEATFFMIGFRVQRNPYLVKQVLKEGHEIGNHTMNHLYASNSSDEKLENDILDGKKFFEKWVKEPLLFRPPGGYINDAVFKTAKEAGYQTVLWSWHQDPRDWANPGVESIVNHVVKNAKSGDIVLLHDGGNDRSQTVAALAKILPELKKQGYRFVTVSELLRYKH.

A NodB homology domain is found at 22-203 (KIIAITFDDG…ELKKQGYRFV (182 aa)). Asp-29 serves as the catalytic Proton acceptor. Residues Asp-30, His-80, and His-84 each coordinate Zn(2+). Residue His-175 is the Proton donor of the active site.

The protein belongs to the polysaccharide deacetylase family. Zn(2+) is required as a cofactor.

The enzyme catalyses peptidoglycan-N-acetyl-D-glucosamine + H2O = peptidoglycan-D-glucosamine + acetate.. Its activity is regulated as follows. Inhibited by CuCl(2) and ZnCl(2). Catalyzes the deacetylation of N-acetylglucosamine (GlcNAc) residues in peptidoglycan. Also acts on soluble chitin substrates and N-acetylchitooligomers. Acts on cell wall peptidoglycan from the Gram-positive bacteria B.cereus and B.subtilis and the Gram-negative bacterium H.pylori. Not active on acetylated xylan. The protein is Peptidoglycan-N-acetylglucosamine deacetylase BC_3618 of Bacillus cereus (strain ATCC 14579 / DSM 31 / CCUG 7414 / JCM 2152 / NBRC 15305 / NCIMB 9373 / NCTC 2599 / NRRL B-3711).